The chain runs to 427 residues: MAP kinase-interacting serine/threonine-protein kinase 1 (427 aa).

Positions 1 to 11 (MVSSQKLEKPI) are enriched in basic and acidic residues. Residues 1-37 (MVSSQKLEKPIEMGSSEPLPIVDSDKRRKKKRKTRAT) are disordered. The residue at position 34 (Thr34) is a Phosphothreonine; by PAK2. Residue Ser39 is modified to Phosphoserine; by PAK2. A Protein kinase domain is found at 49 to 333 (QLTSELLGEG…AAQVLQHPWV (285 aa)). ATP contacts are provided by residues 55 to 63 (LGEGAYAKV) and Lys78. Residue Asp170 is the Proton acceptor of the active site. Phosphoserine occurs at positions 180 and 185. 3 positions are modified to phosphothreonine: Thr209, Thr214, and Thr344. A disordered region spans residues 407–427 (RALAQAGRSRDANPCLTPAGL).

This sequence belongs to the protein kinase superfamily. CAMK Ser/Thr protein kinase family. Interacts with the C-terminal regions of EIF4G1 and EIF4G2. Also binds to dephosphorylated ERK1 and ERK2, and to the p38 kinases. Requires Mg(2+) as cofactor. Dual phosphorylation of Thr-209 and Thr-214 activates the kinase. Phosphorylation of Thr-344 activates the kinase. MAPK3/ERK1 is one of the kinases which activate MKNK1/MNK1. Phosphorylation by PAK2 leads to a reduced phosphorylation of EIF4G1. As to expression, ubiquitously expressed in all tissues examined, with high levels in skeletal muscle.

It carries out the reaction L-seryl-[protein] + ATP = O-phospho-L-seryl-[protein] + ADP + H(+). It catalyses the reaction L-threonyl-[protein] + ATP = O-phospho-L-threonyl-[protein] + ADP + H(+). Phosphorylated and activated by the p38 kinases and kinases in the Erk pathway. Functionally, may play a role in the response to environmental stress and cytokines. Appears to regulate translation by phosphorylating EIF4E, thus increasing the affinity of this protein for the 7-methylguanosine-containing mRNA cap. The protein is MAP kinase-interacting serine/threonine-protein kinase 1 (Mknk1) of Mus musculus (Mouse).